A 409-amino-acid polypeptide reads, in one-letter code: Secreted LysM effector Blys2 (409 aa).

The signal sequence occupies residues 1 to 20 (MTRFTTTLVAALAGANLAAA). Residues 24-71 (YKWRAHAGDTCDSLSSDWSVQVSDFIKWNPSVGANCSNGVTAGQEYCV) form the LysM 1 domain. Residue Asn-58 is glycosylated (N-linked (GlcNAc...) asparagine). The segment at 74–111 (NGAGSKPTTPPTGSPTTLTTAVTTASSTPTQPTDGAPS) is disordered. Positions 87 to 106 (SPTTLTTAVTTASSTPTQPT) are enriched in low complexity. LysM domains are found at residues 129 to 176 (AWYK…YVCV), 206 to 253 (KWYK…FVCV), 283 to 330 (KFYK…YYCI), and 357 to 405 (KYYK…YICV).

The protein belongs to the secreted LysM effector family.

Its subcellular location is the secreted. It localises to the cell wall. Secreted effector that enables the plant pathogenic fungus to manipulate host defenses for successful infection. Required for the full virulence to infect insect hosts. In contrast to Blys5, Blys2 is not able to protect fungal hyphae against the hydrolytic activity of chitinase but plays an important role in evasion of insect immunities. Binds chitin. Coats and protects the cell walls of insect pathogens from host cell recognition. This chain is Secreted LysM effector Blys2, found in Beauveria bassiana (strain ARSEF 2860) (White muscardine disease fungus).